Consider the following 445-residue polypeptide: Phosphoglucosamine mutase (445 aa).

Ser102 functions as the Phosphoserine intermediate in the catalytic mechanism. Mg(2+)-binding residues include Ser102, Asp241, Asp243, and Asp245. At Ser102 the chain carries Phosphoserine.

The protein belongs to the phosphohexose mutase family. The cofactor is Mg(2+). In terms of processing, activated by phosphorylation.

It catalyses the reaction alpha-D-glucosamine 1-phosphate = D-glucosamine 6-phosphate. Catalyzes the conversion of glucosamine-6-phosphate to glucosamine-1-phosphate. This Rhodococcus erythropolis (strain PR4 / NBRC 100887) protein is Phosphoglucosamine mutase.